The sequence spans 342 residues: Apurinic-apyrimidinic endonuclease 1 (342 aa).

Zn(2+)-binding residues include H61, E136, D170, H173, H207, D220, H222, and E252. The segment covering 299–310 (HLNKFEKKEAKK) has biased composition (basic and acidic residues). The interval 299-342 (HLNKFEKKEAKKDRKKKSKDGDQTTLLLRKKQKLGNAEVKSLDE) is disordered.

This sequence belongs to the AP endonuclease 2 family. Zn(2+) serves as cofactor.

The protein localises to the nucleus. Its function is as follows. DNA repair enzyme that cleaves apurinic/apyrimidinic (AP) sites and removes 3'-blocking groups present at single strand breaks of damaged DNA. Provides back-up AP endonuclease (APE) activity to apn2 together with uve1. The chain is Apurinic-apyrimidinic endonuclease 1 (apn1) from Schizosaccharomyces pombe (strain 972 / ATCC 24843) (Fission yeast).